The sequence spans 59 residues: Large ribosomal subunit protein uL30 (59 aa).

This sequence belongs to the universal ribosomal protein uL30 family. Part of the 50S ribosomal subunit.

The chain is Large ribosomal subunit protein uL30 from Leptospira biflexa serovar Patoc (strain Patoc 1 / ATCC 23582 / Paris).